We begin with the raw amino-acid sequence, 412 residues long: Glucose/galactose transporter (412 aa).

11 consecutive transmembrane segments (helical) span residues 21-41, 62-82, 90-110, 113-133, 158-178, 192-212, 239-259, 310-330, 331-351, 363-383, and 388-408; these read YGFALTSLTLLFFMWGFITCL, LIQFCFFGAYFIVSLPAGQLV, GIVVGLIVAAIGCALFIPAAS, VYALFLGALFVLASGVTILQV, FNSLGTTVAPVFGAVLILSAA, FPYLLLALAFTVLAIIFAILK, LGAIGIFVYVGAEVSVGSFLV, AFVAIILLFITVATTGHIAMW, SVLAIGLFNSIMFPTIFSLAL, GILCLAIVGGAIVPLIQGALA, and IHLAFLMPIICYAYIAFYGLI.

Belongs to the major facilitator superfamily. FHS transporter (TC 2.A.1.7) family.

The protein localises to the cell inner membrane. Its function is as follows. Intake of glucose and galactose. The protein is Glucose/galactose transporter (gluP) of Brucella abortus (strain 2308).